Here is a 115-residue protein sequence, read N- to C-terminus: Methylmalonyl-CoA decarboxylase subunit delta (115 aa).

The chain crosses the membrane as a helical span at residues 11–31; the sequence is WLIMAINMTVVFAVLIALGIL. The tract at residues 46–70 is disordered; that stretch reads EAPAATAPVATPTATPVAPANASAQ. Over residues 48–65 the composition is skewed to low complexity; that stretch reads PAATAPVATPTATPVAPA.

This sequence belongs to the OadG family. As to quaternary structure, the methylmalonyl-CoA decarboxylase is composed of five subunits: the carboxyltransferase alpha subunit (MmdA), the tunnel beta subunit (MmdB), the biotin-containing gamma subunit (MmdC), and the delta (MmdD) and epsilon (MmdE) subunits. In terms of processing, the N-terminus is blocked.

It is found in the cell membrane. It carries out the reaction (S)-methylmalonyl-CoA + Na(+)(in) + H(+)(out) = propanoyl-CoA + Na(+)(out) + CO2. Completely inhibited by avidin. Its function is as follows. Subunit of the sodium ion pump methylmalonyl-CoA decarboxylase, which converts the chemical energy of a decarboxylation reaction into an electrochemical gradient of Na(+) ions across the cytoplasmic membrane, thereby creating a sodium ion motive force that is used for ATP synthesis. The delta subunit is required for catalytic activity as well as for the proper assembly of the individual subunits to an enzyme complex. Can also convert malonyl-CoA into acetyl-CoA. This chain is Methylmalonyl-CoA decarboxylase subunit delta, found in Veillonella parvula (Staphylococcus parvulus).